The chain runs to 332 residues: RNA polymerase sigma-B factor (332 aa).

Positions 125-138 (DLIQEGALGLERGV) match the Polymerase core binding motif. Residues 294 to 313 (LVQISQRMGISRERVRQVEK) constitute a DNA-binding region (H-T-H motif).

This sequence belongs to the sigma-70 factor family.

In terms of biological role, sigma factors are initiation factors that promote the attachment of RNA polymerase to specific initiation sites and are then released. The polypeptide is RNA polymerase sigma-B factor (sigB) (Nostoc sp. (strain PCC 7120 / SAG 25.82 / UTEX 2576)).